Here is a 122-residue protein sequence, read N- to C-terminus: Large ribosomal subunit protein uL14c (122 aa).

It belongs to the universal ribosomal protein uL14 family. In terms of assembly, part of the 50S ribosomal subunit.

It localises to the plastid. It is found in the chloroplast. Binds to 23S rRNA. This is Large ribosomal subunit protein uL14c from Huperzia lucidula (Shining clubmoss).